The chain runs to 156 residues: 17.7 kDa class II heat shock protein (156 aa).

The sHSP domain maps to 39-156; it reads DAKAMAATPA…KPKTIQVQVA (118 aa).

Belongs to the small heat shock protein (HSP20) family. In terms of assembly, may form oligomeric structures.

It is found in the cytoplasm. The chain is 17.7 kDa class II heat shock protein (HSP17.7) from Arabidopsis thaliana (Mouse-ear cress).